The following is a 417-amino-acid chain: Serine hydroxymethyltransferase (417 aa).

(6S)-5,6,7,8-tetrahydrofolate contacts are provided by residues leucine 121 and 125 to 127 (GHL). Lysine 229 carries the N6-(pyridoxal phosphate)lysine modification. Residue 355–357 (SPF) participates in (6S)-5,6,7,8-tetrahydrofolate binding.

This sequence belongs to the SHMT family. In terms of assembly, homodimer. The cofactor is pyridoxal 5'-phosphate.

The protein resides in the cytoplasm. It catalyses the reaction (6R)-5,10-methylene-5,6,7,8-tetrahydrofolate + glycine + H2O = (6S)-5,6,7,8-tetrahydrofolate + L-serine. The protein operates within one-carbon metabolism; tetrahydrofolate interconversion. Its pathway is amino-acid biosynthesis; glycine biosynthesis; glycine from L-serine: step 1/1. Catalyzes the reversible interconversion of serine and glycine with tetrahydrofolate (THF) serving as the one-carbon carrier. This reaction serves as the major source of one-carbon groups required for the biosynthesis of purines, thymidylate, methionine, and other important biomolecules. Also exhibits THF-independent aldolase activity toward beta-hydroxyamino acids, producing glycine and aldehydes, via a retro-aldol mechanism. This is Serine hydroxymethyltransferase from Buchnera aphidicola subsp. Baizongia pistaciae (strain Bp).